We begin with the raw amino-acid sequence, 146 residues long: Large ribosomal subunit protein uL15 (146 aa).

The segment covering 1 to 13 has biased composition (basic and acidic residues); that stretch reads MKLNELKPNEGSR. Residues 1–54 form a disordered region; the sequence is MKLNELKPNEGSRRNRKRVGRGTSSGYGKTAGRGQKGQLARTGGKTRLGFEGGQ. Gly residues predominate over residues 23–35; that stretch reads TSSGYGKTAGRGQ.

The protein belongs to the universal ribosomal protein uL15 family. In terms of assembly, part of the 50S ribosomal subunit.

In terms of biological role, binds to the 23S rRNA. In Lactobacillus johnsonii (strain CNCM I-12250 / La1 / NCC 533), this protein is Large ribosomal subunit protein uL15.